A 368-amino-acid polypeptide reads, in one-letter code: MKNKYYPLRSSMDELSAKNDNEIDLEKGPLPEYNSEDGSTLPPYSENINLKDPKQMGANNPNLFNTDESTTPPDYGEDSLSITHRENHSSGTADNSSTSPLKKAFLSFISIFVLNVPAVCYLTYKDALFKDYGKDEWVYFGVWCAICLMIFISLWYFYETWIKAVKVTVIFLAQCIKVTVVFLAQCVKVISIGLFNIRREMMIIIWLLWLIICCILFGCVKSGDLNLNKALIYSTCTISAVLLLIVSSVCIPFWTFERTLAKLAKVFLLQSGIVLVLNGTMFLRGKHFEWTGCEIEASVLFIMGNVLFLCEMECPGALIRTRNSIRNGIAFILGGIGNAMMGLANAFRGGNDNNNNIPLGEMDVEGEV.

Residues 1 to 98 (MKNKYYPLRS…SSGTADNSST (98 aa)) form a disordered region. The segment covering 11–29 (SMDELSAKNDNEIDLEKGP) has biased composition (basic and acidic residues). 2 stretches are compositionally biased toward polar residues: residues 57–72 (GANN…STTP) and 89–98 (SSGTADNSST). The next 7 helical transmembrane spans lie at 105–124 (FLSF…YLTY), 139–158 (YFGV…WYFY), 170–192 (IFLA…VISI), 202–221 (MIII…GCVK), 234–256 (STCT…FWTF), 266–283 (VFLL…TMFL), and 328–350 (GIAF…FRGG).

It belongs to the WTF family. In terms of assembly, homomer. Forms protein aggregates. The two isoforms can interact with each other and with themselves. High sequence similarity is required for their interaction.

It is found in the spore membrane. The protein resides in the vacuole membrane. It localises to the ascus epiplasm. Its subcellular location is the cytoplasm. The protein localises to the endoplasmic reticulum membrane. Its function is as follows. Promotes unequal transmission of alleles from the parental zygote to progeny spores by acting as poison/antidote system where the poison and antidote proteins are produced from the same locus; the poison component is trans-acting and targets all spores within an ascus whereas the antidote component is spore-specific, leading to poisoning of all progeny that do not inherit the allele. Localizes isoform 2 to the vacuole thereby facilitating its degradation. In terms of biological role, forms toxic aggregates that disrupt spore maturation. The protein is Meiotic driver wtf23 of Schizosaccharomyces pombe (strain 972 / ATCC 24843) (Fission yeast).